Here is a 223-residue protein sequence, read N- to C-terminus: UPF0441 protein YgiB (223 aa).

Over residues 178 to 195 the composition is skewed to low complexity; the sequence is TVPKTAMAPKPATTTTVT. The interval 178–223 is disordered; that stretch reads TVPKTAMAPKPATTTTVTRGGFGESVAKQSTMQRSAAGTSTRSMGG. Residues 204–223 are compositionally biased toward polar residues; the sequence is AKQSTMQRSAAGTSTRSMGG.

The protein belongs to the UPF0441 family.

The chain is UPF0441 protein YgiB from Salmonella heidelberg (strain SL476).